We begin with the raw amino-acid sequence, 345 residues long: Tryptophan--tRNA ligase (345 aa).

Residues 12-14 and 20-21 each bind ATP; these read RPT and GH. The 'HIGH' region motif lies at 13–21; that stretch reads PTGKLHLGH. Aspartate 144 contributes to the L-tryptophan binding site. ATP contacts are provided by residues 156-158, leucine 194, and 202-206; these read GKD and KMSKS. The 'KMSKS' region signature appears at 202 to 206; that stretch reads KMSKS.

The protein belongs to the class-I aminoacyl-tRNA synthetase family. As to quaternary structure, homodimer.

It is found in the cytoplasm. It carries out the reaction tRNA(Trp) + L-tryptophan + ATP = L-tryptophyl-tRNA(Trp) + AMP + diphosphate + H(+). In terms of biological role, catalyzes the attachment of tryptophan to tRNA(Trp). The sequence is that of Tryptophan--tRNA ligase from Chlamydia caviae (strain ATCC VR-813 / DSM 19441 / 03DC25 / GPIC) (Chlamydophila caviae).